Reading from the N-terminus, the 328-residue chain is Beta-ketoacyl-[acyl-carrier-protein] synthase III 2 (328 aa).

Active-site residues include Cys113 and His255. The ACP-binding stretch occupies residues 256-260 (QANAR). Asn285 is an active-site residue.

It belongs to the thiolase-like superfamily. FabH family. As to quaternary structure, homodimer.

The protein resides in the cytoplasm. It carries out the reaction malonyl-[ACP] + acetyl-CoA + H(+) = 3-oxobutanoyl-[ACP] + CO2 + CoA. The protein operates within lipid metabolism; fatty acid biosynthesis. Its function is as follows. Catalyzes the condensation reaction of fatty acid synthesis by the addition to an acyl acceptor of two carbons from malonyl-ACP. Catalyzes the first condensation reaction which initiates fatty acid synthesis and may therefore play a role in governing the total rate of fatty acid production. Possesses both acetoacetyl-ACP synthase and acetyl transacylase activities. Its substrate specificity determines the biosynthesis of branched-chain and/or straight-chain of fatty acids. The chain is Beta-ketoacyl-[acyl-carrier-protein] synthase III 2 from Lactiplantibacillus plantarum (strain ATCC BAA-793 / NCIMB 8826 / WCFS1) (Lactobacillus plantarum).